The primary structure comprises 343 residues: Anthranilate phosphoribosyltransferase (343 aa).

Residues Gly84, 87–88, Thr92, 94–97, 112–120, and Ser124 each bind 5-phospho-alpha-D-ribose 1-diphosphate; these read GD, NIST, and KHGNRGVSS. Gly84 lines the anthranilate pocket. Ser96 contacts Mg(2+). Anthranilate is bound at residue Asn115. Arg170 provides a ligand contact to anthranilate. Residues Asp229 and Glu230 each contribute to the Mg(2+) site.

Belongs to the anthranilate phosphoribosyltransferase family. Homodimer. The cofactor is Mg(2+).

The catalysed reaction is N-(5-phospho-beta-D-ribosyl)anthranilate + diphosphate = 5-phospho-alpha-D-ribose 1-diphosphate + anthranilate. Its pathway is amino-acid biosynthesis; L-tryptophan biosynthesis; L-tryptophan from chorismate: step 2/5. Its function is as follows. Catalyzes the transfer of the phosphoribosyl group of 5-phosphorylribose-1-pyrophosphate (PRPP) to anthranilate to yield N-(5'-phosphoribosyl)-anthranilate (PRA). This is Anthranilate phosphoribosyltransferase from Burkholderia orbicola (strain MC0-3).